A 187-amino-acid polypeptide reads, in one-letter code: Elongation factor P (187 aa).

The protein belongs to the elongation factor P family.

It localises to the cytoplasm. It functions in the pathway protein biosynthesis; polypeptide chain elongation. Functionally, involved in peptide bond synthesis. Stimulates efficient translation and peptide-bond synthesis on native or reconstituted 70S ribosomes in vitro. Probably functions indirectly by altering the affinity of the ribosome for aminoacyl-tRNA, thus increasing their reactivity as acceptors for peptidyl transferase. The polypeptide is Elongation factor P (Nocardioides sp. (strain ATCC BAA-499 / JS614)).